Reading from the N-terminus, the 230-residue chain is Cutinase 1 (230 aa).

The first 16 residues, 1 to 16, serve as a signal peptide directing secretion; the sequence is MKFFALTTLLAATASA. Residues 17–31 constitute a propeptide that is removed on maturation; that stretch reads LPTSNPAQELEARQL. G32 carries the N-D-glucuronoyl glycine modification. Residues C47 and C125 are joined by a disulfide bond. The active-site Nucleophile is S136. C187 and C194 form a disulfide bridge. D191 is an active-site residue. Residue H204 is the Proton donor/acceptor of the active site.

It belongs to the cutinase family. The 2 disulfide bonds play a critical role in holding the catalytic residues in juxta-position; reduction of the disulfide bridges results in the complete inactivation of the enzyme. Post-translationally, O-glycosylated; contains one mole each of mannose, arabinose, N-acetylglucosamine, and glucuronic acid.

The protein localises to the secreted. The enzyme catalyses cutin + H2O = cutin monomers.. Inhibited by n-undecyl phosphonate (C11Y4). Inhibited by paraoxon. Catalyzes the hydrolysis of complex carboxylic polyesters found in the cell wall of plants. Degrades cutin, a macromolecule that forms the structure of the plant cuticle. Allows pathogenic fungi to penetrate through the cuticular barrier into the host plant during the initial stage of fungal infection. The sequence is that of Cutinase 1 (CUT1) from Fusarium vanettenii (Neocosmospora pisi).